Reading from the N-terminus, the 111-residue chain is Universal stress protein B (111 aa).

2 helical membrane passes run 1–21 (MINT…NMLR) and 90–110 (FILT…LMLW).

This sequence belongs to the universal stress protein B family.

The protein localises to the cell inner membrane. This is Universal stress protein B from Edwardsiella ictaluri (strain 93-146).